We begin with the raw amino-acid sequence, 253 residues long: LexA repressor (253 aa).

A disordered region spans residues 1-34 (MAIEKKPAGARGSRGSRTVKTLPNGKPDPASLSD). The H-T-H motif DNA-binding region spans 56-76 (IREIGDAAGLQSTSSVAYQLK). Over residues 82 to 106 (GFLRRDPNKPRAVDVRHLPETESRS) the composition is skewed to basic and acidic residues. Residues 82–127 (GFLRRDPNKPRAVDVRHLPETESRSSKAATQAKSKAPQAGAHDPEL) form a disordered region. The segment covering 107 to 120 (SKAATQAKSKAPQA) has biased composition (low complexity). Residues serine 177 and lysine 214 each act as for autocatalytic cleavage activity in the active site.

This sequence belongs to the peptidase S24 family. In terms of assembly, homodimer.

The enzyme catalyses Hydrolysis of Ala-|-Gly bond in repressor LexA.. Its function is as follows. Represses a number of genes involved in the response to DNA damage (SOS response), including recA and lexA. In the presence of single-stranded DNA, RecA interacts with LexA causing an autocatalytic cleavage which disrupts the DNA-binding part of LexA, leading to derepression of the SOS regulon and eventually DNA repair. This is LexA repressor from Corynebacterium glutamicum (strain R).